The primary structure comprises 364 residues: Chorismate synthase (364 aa).

The disordered stretch occupies residues 41–60; that stretch reads MQHDLDRRRPGTSRYTTARR. The NADP(+) site is built by R48 and R54. FMN is bound by residues 125–127, 238–239, G278, 293–297, and R319; these read RSS, NA, and KPTSS.

This sequence belongs to the chorismate synthase family. Homotetramer. The cofactor is FMNH2.

The enzyme catalyses 5-O-(1-carboxyvinyl)-3-phosphoshikimate = chorismate + phosphate. It participates in metabolic intermediate biosynthesis; chorismate biosynthesis; chorismate from D-erythrose 4-phosphate and phosphoenolpyruvate: step 7/7. Its function is as follows. Catalyzes the anti-1,4-elimination of the C-3 phosphate and the C-6 proR hydrogen from 5-enolpyruvylshikimate-3-phosphate (EPSP) to yield chorismate, which is the branch point compound that serves as the starting substrate for the three terminal pathways of aromatic amino acid biosynthesis. This reaction introduces a second double bond into the aromatic ring system. This chain is Chorismate synthase, found in Shewanella sp. (strain ANA-3).